A 143-amino-acid chain; its full sequence is Transcriptional regulator SlyA (143 aa).

Residues 2–135 enclose the HTH marR-type domain; that stretch reads ESTLGSDLAR…LSGLIDKLER (134 aa). The segment at residues 49 to 72 is a DNA-binding region (H-T-H motif); that stretch reads QIQLAKAIGIEQPSLVRTLDQLEE.

The protein belongs to the SlyA family. As to quaternary structure, homodimer.

Its function is as follows. Transcription regulator that can specifically activate or repress expression of target genes. This is Transcriptional regulator SlyA from Yersinia enterocolitica serotype O:8 / biotype 1B (strain NCTC 13174 / 8081).